The primary structure comprises 447 residues: UPF0210 protein lhv_0606 (447 aa).

It belongs to the UPF0210 family. In terms of assembly, homodimer.

This chain is UPF0210 protein lhv_0606, found in Lactobacillus helveticus (strain DPC 4571).